The sequence spans 349 residues: Hydroxymethylglutaryl-CoA synthase (349 aa).

The (3S)-3-hydroxy-3-methylglutaryl-CoA site is built by Asp30 and Ala31. Glu82 acts as the Proton donor/acceptor in catalysis. Cys114 and Thr155 together coordinate (3S)-3-hydroxy-3-methylglutaryl-CoA. The active-site Acyl-thioester intermediate is the Cys114. Arg203 lines the CoA pocket. 2 residues coordinate (3S)-3-hydroxy-3-methylglutaryl-CoA: Thr205 and His238. The Proton donor/acceptor role is filled by His238. Residue Lys243 participates in CoA binding. Residues Asn270 and Ser300 each contribute to the (3S)-3-hydroxy-3-methylglutaryl-CoA site.

Belongs to the thiolase-like superfamily. Archaeal HMG-CoA synthase family. In terms of assembly, interacts with acetoacetyl-CoA thiolase that catalyzes the precedent step in the pathway and with a DUF35 protein. The acetoacetyl-CoA thiolase/HMG-CoA synthase complex channels the intermediate via a fused CoA-binding site, which allows for efficient coupling of the endergonic thiolase reaction with the exergonic HMGCS reaction.

The catalysed reaction is acetoacetyl-CoA + acetyl-CoA + H2O = (3S)-3-hydroxy-3-methylglutaryl-CoA + CoA + H(+). It functions in the pathway metabolic intermediate biosynthesis; (R)-mevalonate biosynthesis; (R)-mevalonate from acetyl-CoA: step 2/3. In terms of biological role, catalyzes the condensation of acetyl-CoA with acetoacetyl-CoA to form 3-hydroxy-3-methylglutaryl-CoA (HMG-CoA). Functions in the mevalonate (MVA) pathway leading to isopentenyl diphosphate (IPP), a key precursor for the biosynthesis of isoprenoid compounds that are building blocks of archaeal membrane lipids. This Methanococcus maripaludis (strain C5 / ATCC BAA-1333) protein is Hydroxymethylglutaryl-CoA synthase.